The chain runs to 521 residues: Cytochrome P450 1A1 (521 aa).

Phe229 provides a ligand contact to substrate. Heme is bound at residue Cys463.

This sequence belongs to the cytochrome P450 family. The cofactor is heme.

It localises to the endoplasmic reticulum membrane. The protein localises to the microsome membrane. The enzyme catalyses an organic molecule + reduced [NADPH--hemoprotein reductase] + O2 = an alcohol + oxidized [NADPH--hemoprotein reductase] + H2O + H(+). In terms of biological role, cytochromes P450 are a group of heme-thiolate monooxygenases. They oxidize a variety of structurally unrelated compounds, including steroids, fatty acids, and xenobiotics. The polypeptide is Cytochrome P450 1A1 (cyp1a1) (Chelon auratus (Golden grey mullet)).